Reading from the N-terminus, the 101-residue chain is Integration host factor subunit beta (101 aa).

It belongs to the bacterial histone-like protein family. As to quaternary structure, heterodimer of an alpha and a beta chain.

This protein is one of the two subunits of integration host factor, a specific DNA-binding protein that functions in genetic recombination as well as in transcriptional and translational control. The polypeptide is Integration host factor subunit beta (Maricaulis maris (strain MCS10) (Caulobacter maris)).